Here is a 327-residue protein sequence, read N- to C-terminus: Chlorophenol reductase (327 aa).

The N-terminal stretch at 1–24 is a signal peptide; that stretch reads MKKTLGIILSISLAFSVLALPIFA. The region spanning 65–110 is the LysM domain; it reads TYYTVVSGDFFWQIAAKHGLTIDALAKLNPQIKNVNLIFPGQKILV.

It depends on cob(I)alamin as a cofactor.

The protein resides in the secreted. It localises to the cell wall. It is found in the cell membrane. With respect to regulation, inhibited by sulfide and to a lesser extent by nitrite. In terms of biological role, reductive dechlorination of ortho-chlorophenols. Dechlorinates in the ortho position with respect to the hydroxyl group. This chain is Chlorophenol reductase, found in Desulfitobacterium hafniense (Desulfitobacterium frappieri).